The sequence spans 573 residues: Dihydroxy-acid dehydratase (573 aa).

A compositionally biased stretch (basic and acidic residues) spans 1–14 (MTEKSPKPHKRSDA). The interval 1 to 21 (MTEKSPKPHKRSDAITEGPNR) is disordered. [2Fe-2S] cluster is bound at residue cysteine 55. Aspartate 87 contributes to the Mg(2+) binding site. Residue cysteine 128 coordinates [2Fe-2S] cluster. Residues aspartate 129 and lysine 130 each contribute to the Mg(2+) site. N6-carboxylysine is present on lysine 130. [2Fe-2S] cluster is bound at residue cysteine 200. Glutamate 450 is a Mg(2+) binding site. The active-site Proton acceptor is the serine 476.

This sequence belongs to the IlvD/Edd family. Homodimer. The cofactor is [2Fe-2S] cluster. Mg(2+) serves as cofactor.

The enzyme catalyses (2R)-2,3-dihydroxy-3-methylbutanoate = 3-methyl-2-oxobutanoate + H2O. The catalysed reaction is (2R,3R)-2,3-dihydroxy-3-methylpentanoate = (S)-3-methyl-2-oxopentanoate + H2O. Its pathway is amino-acid biosynthesis; L-isoleucine biosynthesis; L-isoleucine from 2-oxobutanoate: step 3/4. It functions in the pathway amino-acid biosynthesis; L-valine biosynthesis; L-valine from pyruvate: step 3/4. Its function is as follows. Functions in the biosynthesis of branched-chain amino acids. Catalyzes the dehydration of (2R,3R)-2,3-dihydroxy-3-methylpentanoate (2,3-dihydroxy-3-methylvalerate) into 2-oxo-3-methylpentanoate (2-oxo-3-methylvalerate) and of (2R)-2,3-dihydroxy-3-methylbutanoate (2,3-dihydroxyisovalerate) into 2-oxo-3-methylbutanoate (2-oxoisovalerate), the penultimate precursor to L-isoleucine and L-valine, respectively. This is Dihydroxy-acid dehydratase from Koribacter versatilis (strain Ellin345).